Reading from the N-terminus, the 24-residue chain is Antimicrobial peptide PGQ (24 aa).

The protein belongs to the gastrin/cholecystokinin family. Magainin subfamily. In terms of tissue distribution, is synthesized in the stomach and stored in a novel granular multinucleated cell in the gastric mucosa. It is stored as active, processed peptides in large granules within the granular gland secretions of the skin.

The protein resides in the secreted. Functionally, antimicrobial peptide. The polypeptide is Antimicrobial peptide PGQ (pgq) (Xenopus laevis (African clawed frog)).